A 902-amino-acid polypeptide reads, in one-letter code: Phosphoenolpyruvate carboxylase (902 aa).

His132 is a catalytic residue. The disordered stretch occupies residues 327 to 346 (DALERPEKTAGKKSSKRTPY). Lys561 is a catalytic residue.

This sequence belongs to the PEPCase type 1 family. The cofactor is Mg(2+).

It catalyses the reaction oxaloacetate + phosphate = phosphoenolpyruvate + hydrogencarbonate. Forms oxaloacetate, a four-carbon dicarboxylic acid source for the tricarboxylic acid cycle. The sequence is that of Phosphoenolpyruvate carboxylase from Corynebacterium diphtheriae (strain ATCC 700971 / NCTC 13129 / Biotype gravis).